The following is a 519-amino-acid chain: O-fucosyltransferase 1 (519 aa).

The Cytoplasmic segment spans residues M1 to K24. Residues L25 to I45 traverse the membrane as a helical; Signal-anchor for type II membrane protein segment. Over G46–R519 the chain is Lumenal. The segment at K67–K86 is disordered. N118 carries N-linked (GlcNAc...) asparagine glycosylation. H260 to R262 is a substrate binding site. N327, N357, and N511 each carry an N-linked (GlcNAc...) asparagine glycan. The disordered stretch occupies residues R497–R519. Residues S506 to R519 are compositionally biased toward polar residues.

The protein belongs to the glycosyltransferase GT106 family.

It localises to the golgi apparatus membrane. It functions in the pathway glycan metabolism. This chain is O-fucosyltransferase 1, found in Arabidopsis thaliana (Mouse-ear cress).